An 840-amino-acid chain; its full sequence is Lethal(3)malignant brain tumor-like protein 1 (840 aa).

Position 117 is a phosphoserine (serine 117). The tract at residues 127–269 is disordered; it reads EYEDGGAPAG…WSSSQPATGE (143 aa). Residues 156 to 165 show a composition bias toward acidic residues; that stretch reads PNQDPPEDDS. A compositionally biased stretch (polar residues) spans 200–210; that stretch reads VENSSGSTSAS. The span at 236-247 shows a compositional bias: basic and acidic residues; the sequence is AMEKQEEGKDPE. Residues 250 to 266 are compositionally biased toward polar residues; sequence PTASTPESEEWSSSQPA. MBT repeat units lie at residues 274 to 374, 382 to 481, and 490 to 585; these read WSWE…LQPP, FSWS…LTPP, and FCWE…LQPP. The segment at 447-454 is interaction with monomethylated and dimethylated peptides; it reads FDNWDDTY. The disordered stretch occupies residues 580–605; the sequence is HPLQPPLGPREPSSASPGGCPPLSYR. Residues 613–656 form a CCHHC-type zinc finger; the sequence is SKYSFHHRKCPTPGCDGSGHVTGKFTAHHCLSGCPLAERNQSRL. Residues cysteine 622, cysteine 627, histidine 640, and cysteine 646 each contribute to the Zn(2+) site. The segment at 657 to 697 is disordered; that stretch reads KAELSDSEASARKKNLSGFSPRKKPRHHGRIGRPPKYRKIP. The segment covering 677–695 has biased composition (basic residues); sequence PRKKPRHHGRIGRPPKYRK.

In terms of assembly, homodimer. Interacts with RB1/RB (when monomethylated at 'Lys-860'). Interacts with p53/TP53 (when monomethylated at 'Lys-382'). Interacts with CBX3, ETV6, KMT5A and VCP/p97. In terms of processing, ubiquitinated in a VCP/p97-dependent way following DNA damage, leading to its removal from DNA damage sites, promoting accessibility of H4K20me2 mark for DNA repair protein TP53BP1, which is then recruited to DNA damage sites. As to expression, widely expressed. Expression is reduced in colorectal cancer cell line SW480 and promyelocytic leukemia cell line HL-60.

The protein localises to the nucleus. In terms of biological role, polycomb group (PcG) protein that specifically recognizes and binds mono- and dimethyllysine residues on target proteins, thereby acting as a 'reader' of a network of post-translational modifications. PcG proteins maintain the transcriptionally repressive state of genes: acts as a chromatin compaction factor by recognizing and binding mono- and dimethylated histone H1b/H1-4 at 'Lys-26' (H1bK26me1 and H1bK26me2) and histone H4 at 'Lys-20' (H4K20me1 and H4K20me2), leading to condense chromatin and repress transcription. Recognizes and binds p53/TP53 monomethylated at 'Lys-382', leading to repress p53/TP53-target genes. Also recognizes and binds RB1/RB monomethylated at 'Lys-860'. Participates in the ETV6-mediated repression. Probably plays a role in cell proliferation. Overexpression induces multinucleated cells, suggesting that it is required to accomplish normal mitosis. The polypeptide is Lethal(3)malignant brain tumor-like protein 1 (L3MBTL1) (Homo sapiens (Human)).